The chain runs to 234 residues: Urease accessory protein UreF (234 aa).

This sequence belongs to the UreF family. UreD, UreF and UreG form a complex that acts as a GTP-hydrolysis-dependent molecular chaperone, activating the urease apoprotein by helping to assemble the nickel containing metallocenter of UreC. The UreE protein probably delivers the nickel.

The protein resides in the cytoplasm. In terms of biological role, required for maturation of urease via the functional incorporation of the urease nickel metallocenter. In Azoarcus sp. (strain BH72), this protein is Urease accessory protein UreF.